The sequence spans 355 residues: 6-aminohexanoate-oligomer endohydrolase (355 aa).

Thr267 acts as the Nucleophile in catalysis.

Belongs to the peptidase S58 family. Heterotetramer composed of 4 alpha/beta heterodimers. Exists at the monomer/dimer/trimer equilibrium in aqueous solution. In terms of processing, expressed as an inactive precursor that is cleaved autocatalytically at Asn266/Thr267 to generate an active enzyme composed of an alpha subunit and a beta subunit.

It carries out the reaction [N-(6-aminohexanoyl)]n + H2O = [N-(6-aminohexanoyl)]n-x + [N-(6-aminohexanoyl)]x.. It participates in xenobiotic degradation; nylon-6 oligomer degradation. In terms of biological role, involved in the degradation of nylon-6 oligomers. Degrades cyclic and linear oligomers of 6-aminohexanoate (Ahx) with a degree of polymerization greater than three by an endo-type mode. Cannot use Ahx cyclic dimer or the Ahx linear dimer. This is 6-aminohexanoate-oligomer endohydrolase from Paenarthrobacter ureafaciens.